A 186-amino-acid chain; its full sequence is Interferon beta (186 aa).

A signal peptide spans 1–21; the sequence is MTYRWILPMALLLCFSTTALS. A Phosphotyrosine modification is found at Tyr24. Residues Cys52 and Cys161 are joined by a disulfide bond. Residues Asn101 and Asn136 are each glycosylated (N-linked (GlcNAc...) asparagine).

It belongs to the alpha/beta interferon family. As to quaternary structure, monomer.

The protein localises to the secreted. In terms of biological role, type I interferon cytokine that plays a key role in the innate immune response to infection, developing tumors and other inflammatory stimuli. Signals via binding to high-affinity (IFNAR2) and low-affinity (IFNAR1) heterodimeric receptor, activating the canonical Jak-STAT signaling pathway resulting in transcriptional activation or repression of interferon-regulated genes that encode the effectors of the interferon response, such as antiviral proteins, regulators of cell proliferation and differentiation, and immunoregulatory proteins. Signals mostly via binding to a IFNAR1-IFNAR2 heterodimeric receptor, but can also function with IFNAR1 alone and independently of Jak-STAT pathways. Elicits a wide variety of responses, including antiviral and antibacterial activities, and can regulate the development of B-cells, myelopoiesis and lipopolysaccharide (LPS)-inducible production of tumor necrosis factor. Plays a role in neuronal homeostasis by regulating dopamine turnover and protecting dopaminergic neurons: acts by promoting neuronal autophagy and alpha-synuclein clearance, thereby preventing dopaminergic neuron loss. IFNB1 is more potent than interferon-alpha (IFN-alpha) in inducing the apoptotic and antiproliferative pathways required for control of tumor cell growth. The polypeptide is Interferon beta (IFNB1) (Equus caballus (Horse)).